The following is a 172-amino-acid chain: Adenine phosphoribosyltransferase (172 aa).

This sequence belongs to the purine/pyrimidine phosphoribosyltransferase family. In terms of assembly, homodimer.

It is found in the cytoplasm. The enzyme catalyses AMP + diphosphate = 5-phospho-alpha-D-ribose 1-diphosphate + adenine. The protein operates within purine metabolism; AMP biosynthesis via salvage pathway; AMP from adenine: step 1/1. Its function is as follows. Catalyzes a salvage reaction resulting in the formation of AMP, that is energically less costly than de novo synthesis. The protein is Adenine phosphoribosyltransferase of Levilactobacillus brevis (strain ATCC 367 / BCRC 12310 / CIP 105137 / JCM 1170 / LMG 11437 / NCIMB 947 / NCTC 947) (Lactobacillus brevis).